Reading from the N-terminus, the 105-residue chain is Small ribosomal subunit protein uS17 (105 aa).

This sequence belongs to the universal ribosomal protein uS17 family. As to quaternary structure, part of the 30S ribosomal subunit.

One of the primary rRNA binding proteins, it binds specifically to the 5'-end of 16S ribosomal RNA. The polypeptide is Small ribosomal subunit protein uS17 (Thermus aquaticus).